A 190-amino-acid polypeptide reads, in one-letter code: RNA pyrophosphohydrolase (190 aa).

A Nudix hydrolase domain is found at 6–149 (GYRPNVGIVL…KRSVYARALC (144 aa)). Residues 38–59 (GGMHSDETPVEAMYRELNEETG) carry the Nudix box motif.

The protein belongs to the Nudix hydrolase family. RppH subfamily. A divalent metal cation is required as a cofactor.

Its function is as follows. Accelerates the degradation of transcripts by removing pyrophosphate from the 5'-end of triphosphorylated RNA, leading to a more labile monophosphorylated state that can stimulate subsequent ribonuclease cleavage. The sequence is that of RNA pyrophosphohydrolase from Xylella fastidiosa (strain Temecula1 / ATCC 700964).